The sequence spans 197 residues: Peptidyl-tRNA hydrolase (197 aa).

Y17 serves as a coordination point for tRNA. The active-site Proton acceptor is H22. Residues F68, N70, and N116 each contribute to the tRNA site.

Belongs to the PTH family. Monomer.

Its subcellular location is the cytoplasm. It catalyses the reaction an N-acyl-L-alpha-aminoacyl-tRNA + H2O = an N-acyl-L-amino acid + a tRNA + H(+). Functionally, hydrolyzes ribosome-free peptidyl-tRNAs (with 1 or more amino acids incorporated), which drop off the ribosome during protein synthesis, or as a result of ribosome stalling. Catalyzes the release of premature peptidyl moieties from peptidyl-tRNA molecules trapped in stalled 50S ribosomal subunits, and thus maintains levels of free tRNAs and 50S ribosomes. In Yersinia enterocolitica serotype O:8 / biotype 1B (strain NCTC 13174 / 8081), this protein is Peptidyl-tRNA hydrolase.